The primary structure comprises 618 residues: Arginine--tRNA ligase (618 aa).

The short motif at 113-123 (ANPIHPLHIGH) is the 'HIGH' region element.

Belongs to the class-I aminoacyl-tRNA synthetase family.

The protein resides in the cytoplasm. The catalysed reaction is tRNA(Arg) + L-arginine + ATP = L-arginyl-tRNA(Arg) + AMP + diphosphate. The chain is Arginine--tRNA ligase from Sulfolobus acidocaldarius (strain ATCC 33909 / DSM 639 / JCM 8929 / NBRC 15157 / NCIMB 11770).